Here is a 326-residue protein sequence, read N- to C-terminus: Phospho-N-acetylmuramoyl-pentapeptide-transferase (326 aa).

The next 9 helical transmembrane spans lie at 3–23 (ISIS…PAFI), 51–71 (TMGG…LALF), 79–99 (VGMI…DDFL), 115–135 (LALQ…GGDM), 138–158 (VFSY…FWLV), 169–189 (GIDG…GVIA), 195–215 (MDIL…FVFN), 221–243 (VFMG…MALH), and 306–326 (FFFW…LYLM).

The protein belongs to the glycosyltransferase 4 family. MraY subfamily. The cofactor is Mg(2+).

Its subcellular location is the cell membrane. The catalysed reaction is UDP-N-acetyl-alpha-D-muramoyl-L-alanyl-gamma-D-glutamyl-L-lysyl-D-alanyl-D-alanine + di-trans,octa-cis-undecaprenyl phosphate = Mur2Ac(oyl-L-Ala-gamma-D-Glu-L-Lys-D-Ala-D-Ala)-di-trans,octa-cis-undecaprenyl diphosphate + UMP. Its pathway is cell wall biogenesis; peptidoglycan biosynthesis. Catalyzes the initial step of the lipid cycle reactions in the biosynthesis of the cell wall peptidoglycan: transfers peptidoglycan precursor phospho-MurNAc-pentapeptide from UDP-MurNAc-pentapeptide onto the lipid carrier undecaprenyl phosphate, yielding undecaprenyl-pyrophosphoryl-MurNAc-pentapeptide, known as lipid I. This is Phospho-N-acetylmuramoyl-pentapeptide-transferase from Streptococcus pneumoniae (strain ATCC 700669 / Spain 23F-1).